A 346-amino-acid chain; its full sequence is Elongation factor Ts (346 aa).

Residues 80 to 83 form an involved in Mg(2+) ion dislocation from EF-Tu region; sequence TDFV.

Belongs to the EF-Ts family.

The protein resides in the cytoplasm. Functionally, associates with the EF-Tu.GDP complex and induces the exchange of GDP to GTP. It remains bound to the aminoacyl-tRNA.EF-Tu.GTP complex up to the GTP hydrolysis stage on the ribosome. The protein is Elongation factor Ts of Streptococcus pneumoniae serotype 19F (strain G54).